The primary structure comprises 178 residues: Large ribosomal subunit protein uL6 (178 aa).

This sequence belongs to the universal ribosomal protein uL6 family. Part of the 50S ribosomal subunit.

Functionally, this protein binds to the 23S rRNA, and is important in its secondary structure. It is located near the subunit interface in the base of the L7/L12 stalk, and near the tRNA binding site of the peptidyltransferase center. This chain is Large ribosomal subunit protein uL6, found in Coxiella burnetii (strain CbuK_Q154) (Coxiella burnetii (strain Q154)).